The following is a 416-amino-acid chain: Tyrosine--tRNA ligase (416 aa).

Residue Y40 coordinates L-tyrosine. A 'HIGH' region motif is present at residues 45-54 (ATAKSLHVGS). L-tyrosine-binding residues include Y177 and Q181. Positions 237 to 241 (KMGKS) match the 'KMSKS' region motif. K240 provides a ligand contact to ATP. The region spanning 351 to 415 (ISIVQLIVKS…GKKRHAMVQL (65 aa)) is the S4 RNA-binding domain.

It belongs to the class-I aminoacyl-tRNA synthetase family. TyrS type 1 subfamily. In terms of assembly, homodimer.

It localises to the cytoplasm. It carries out the reaction tRNA(Tyr) + L-tyrosine + ATP = L-tyrosyl-tRNA(Tyr) + AMP + diphosphate + H(+). Its function is as follows. Catalyzes the attachment of tyrosine to tRNA(Tyr) in a two-step reaction: tyrosine is first activated by ATP to form Tyr-AMP and then transferred to the acceptor end of tRNA(Tyr). The sequence is that of Tyrosine--tRNA ligase from Roseobacter denitrificans (strain ATCC 33942 / OCh 114) (Erythrobacter sp. (strain OCh 114)).